The chain runs to 381 residues: Carboxylesterase 5A (381 aa).

Ser-108 (acyl-ester intermediate) is an active-site residue. An intrachain disulfide couples Cys-162 to Cys-173. An N-linked (GlcNAc...) asparagine glycan is attached at Asn-163. Glu-227 functions as the Charge relay system in the catalytic mechanism. Residue Asn-245 is glycosylated (N-linked (GlcNAc...) asparagine). Residue His-336 is the Charge relay system of the active site.

Belongs to the type-B carboxylesterase/lipase family. As to quaternary structure, component of a epididymal complex at least composed of soluble form of prion protein PRNP, CLU, BPI, CES5A, MANBA and GLB1. Post-translationally, N-glycosylated. As to expression, detected in corpus and cauda epididymal fluid. Present in seminal fluid but not found to be associated with sperm (at protein level). Not expressed in other tissues.

The protein resides in the secreted. It catalyses the reaction a carboxylic ester + H2O = an alcohol + a carboxylate + H(+). Involved in the detoxification of xenobiotics and in the activation of ester and amide prodrugs. This chain is Carboxylesterase 5A (CES5A), found in Ovis aries (Sheep).